A 188-amino-acid polypeptide reads, in one-letter code: Elongation factor P (188 aa).

It belongs to the elongation factor P family.

Its subcellular location is the cytoplasm. It functions in the pathway protein biosynthesis; polypeptide chain elongation. Functionally, involved in peptide bond synthesis. Stimulates efficient translation and peptide-bond synthesis on native or reconstituted 70S ribosomes in vitro. Probably functions indirectly by altering the affinity of the ribosome for aminoacyl-tRNA, thus increasing their reactivity as acceptors for peptidyl transferase. This chain is Elongation factor P, found in Gemmatimonas aurantiaca (strain DSM 14586 / JCM 11422 / NBRC 100505 / T-27).